The primary structure comprises 121 residues: Probable V-type proton ATPase subunit F (121 aa).

It belongs to the V-ATPase F subunit family. V-ATPase is a heteromultimeric enzyme made up of two complexes: the ATP-hydrolytic V1 complex and the proton translocation V0 complex. The V1 complex consists of three catalytic AB heterodimers that form a heterohexamer, three peripheral stalks each consisting of EG heterodimers, one central rotor including subunits D and F, and the regulatory subunits C and H. The proton translocation complex V0 consists of the proton transport subunit a, a ring of proteolipid subunits c9c'', rotary subunit d, subunits e and f, and the accessory subunits vah-19/Ac45 and vah-20/PRR.

Subunit of the V1 complex of vacuolar(H+)-ATPase (V-ATPase), a multisubunit enzyme composed of a peripheral complex (V1) that hydrolyzes ATP and a membrane integral complex (V0) that translocates protons. V-ATPase is responsible for acidifying and maintaining the pH of intracellular compartments and in some cell types, is targeted to the plasma membrane, where it is responsible for acidifying the extracellular environment. Required along with other vacuolar ATPase components for the removal of protein aggregates which form in immature oocytes in the distal gonad. This removal occurs as the oocytes mature and move to the proximal gonad, is triggered by the introduction of sperm through mating and occurs before fertilization. The introduction of sperm triggers V-ATPase accumulation in proximal oocytes and induces lysosomal acidification which leads to engulfing of protein aggregates by lysosomes and subsequent clearance of the aggregates. Lysosomal acidification also leads to changes in mitochondrial morphology and function. Mitochondria in distal immature oocytes are fragmented, produce high levels of reactive oxygen species (ROS) and have high membrane potential, indicative of metabolic inactivity. In contrast, mitochondria in proximal mature oocytes are tubular with lower ROS levels and membrane potential, indicative of an active metabolic state required for aggregate mobilization before clearance. This is Probable V-type proton ATPase subunit F from Caenorhabditis elegans.